A 727-amino-acid chain; its full sequence is DNA topoisomerase 3 (727 aa).

Positions 3–136 (KTVVLAEKPS…IKRLWISSVT (134 aa)) constitute a Toprim domain. Residues Glu9 and Asp105 each coordinate Mg(2+). The 441-residue stretch at 153-593 (YENLYHSAVA…DMKAYAHQTV (441 aa)) folds into the Topo IA-type catalytic domain. Residues 187–192 (SCGRVQ) are interaction with DNA. The active-site O-(5'-phospho-DNA)-tyrosine intermediate is the Tyr310. A compositionally biased stretch (basic and acidic residues) spans 685–699 (KRKNKDKARATKRDV). The tract at residues 685–714 (KRKNKDKARATKRDVSSYMKKQNKDEPINN) is disordered.

Belongs to the type IA topoisomerase family. Mg(2+) is required as a cofactor.

It carries out the reaction ATP-independent breakage of single-stranded DNA, followed by passage and rejoining.. Functionally, releases the supercoiling and torsional tension of DNA, which is introduced during the DNA replication and transcription, by transiently cleaving and rejoining one strand of the DNA duplex. Introduces a single-strand break via transesterification at a target site in duplex DNA. The scissile phosphodiester is attacked by the catalytic tyrosine of the enzyme, resulting in the formation of a DNA-(5'-phosphotyrosyl)-enzyme intermediate and the expulsion of a 3'-OH DNA strand. The free DNA strand then undergoes passage around the unbroken strand, thus removing DNA supercoils. Finally, in the religation step, the DNA 3'-OH attacks the covalent intermediate to expel the active-site tyrosine and restore the DNA phosphodiester backbone. In Bacillus subtilis (strain 168), this protein is DNA topoisomerase 3.